A 693-amino-acid chain; its full sequence is E3 ubiquitin-protein ligase MARCHF7 (693 aa).

Residue M1 is modified to N-acetylmethionine. Disordered stretches follow at residues 1-43, 69-136, 158-281, 296-342, 361-430, 445-475, and 512-533; these read MESK…RDSS, ESEI…LGSF, LMDY…RRTT, FFSR…EGRA, LSQN…RDSN, AANR…RNPG, and WNST…PEKL. Polar residues-rich tracts occupy residues 14–36, 95–105, 112–132, 167–184, and 192–215; these read VQPS…LNDS, SCTNCASTSAG, LNTV…SSMV, DFTT…SYSQ, and AVST…QTVP. The span at 216-234 shows a compositional bias: low complexity; that stretch reads SSRDSSRSSFRSHFSPRQS. Over residues 236 to 267 the composition is skewed to polar residues; it reads SFRNSSHPAFSYFSSRNETPTISNSERGSSQR. Positions 268–279 are enriched in basic and acidic residues; it reads PYRESSDNEGRR. The segment covering 296-305 has biased composition (low complexity); the sequence is FFSRRSSQDS. Residues 306-323 are compositionally biased toward polar residues; that stretch reads LNTRSLSSENYISPRTLT. Phosphoserine is present on S318. The segment covering 324–337 has biased composition (low complexity); sequence SQSRNNGTSSSSDV. At S390 the chain carries Phosphoserine. Low complexity predominate over residues 451-463; the sequence is ASGASSSAAAGGS. A compositionally biased stretch (basic and acidic residues) spans 517 to 533; it reads GKNDKAKSAPSRDPEKL. The RING-CH-type zinc-finger motif lies at 546 to 616; sequence DDEEEGDLCR…ELCKEKLQLN (71 aa). Positions 554, 557, 572, 574, 582, 585, 606, and 609 each coordinate Zn(2+). A Phosphothreonine modification is found at T688. S689 is modified (phosphoserine).

As to expression, expressed in brain, thymus, muscle and kidney.

It is found in the cytoplasm. It carries out the reaction S-ubiquitinyl-[E2 ubiquitin-conjugating enzyme]-L-cysteine + [acceptor protein]-L-lysine = [E2 ubiquitin-conjugating enzyme]-L-cysteine + N(6)-ubiquitinyl-[acceptor protein]-L-lysine.. It participates in protein modification; protein ubiquitination. Functionally, E3 ubiquitin-protein ligase which may specifically enhance the E2 activity of HIP2. E3 ubiquitin ligases accept ubiquitin from an E2 ubiquitin-conjugating enzyme in the form of a thioester and then directly transfer the ubiquitin to targeted substrates. May be involved in T-cell proliferation by regulating LIF secretion. May play a role in lysosome homeostasis. Promotes 'Lys-6', 'Lys-11' and 'Lys-63'-linked mixed polyubiquitination on ATG14 leading to the inhibition of autophagy by impairing the interaction between ATG14 and STX7. Participates in the dopamine-mediated negative regulation of the NLRP3 inflammasome by promoting its uibiquitination and subsequent degradation. This is E3 ubiquitin-protein ligase MARCHF7 (Marchf7) from Mus musculus (Mouse).